The chain runs to 68 residues: Antimicrobial peptide UyCT5 (68 aa).

A signal peptide spans methionine 1–alanine 23. Position 36 is a leucine amide (leucine 36). The propeptide occupies glycine 40–arginine 68.

This sequence belongs to the non-disulfide-bridged peptide (NDBP) superfamily. Short antimicrobial peptide (group 4) family. In terms of tissue distribution, expressed by the venom gland.

It localises to the secreted. The protein localises to the target cell membrane. Antimicrobial peptide that inhibits the growth of Gram-positive (S.aureus, MIC=1 uM) and Gram-negative bacteria (E.coli, MIC=15 uM and P.aeruginosa, MIC=2 uM). It also shows 37% of hemolysis when 15 uM are tested (93% at 50 uM). This is Antimicrobial peptide UyCT5 from Urodacus yaschenkoi (Inland robust scorpion).